A 1427-amino-acid chain; its full sequence is DNA-directed RNA polymerase subunit beta' (1427 aa).

The Zn(2+) site is built by Cys-66, Cys-68, Cys-81, and Cys-84. Asp-472, Asp-474, and Asp-476 together coordinate Mg(2+). 4 residues coordinate Zn(2+): Cys-815, Cys-889, Cys-896, and Cys-899.

The protein belongs to the RNA polymerase beta' chain family. The RNAP catalytic core consists of 2 alpha, 1 beta, 1 beta' and 1 omega subunit. When a sigma factor is associated with the core the holoenzyme is formed, which can initiate transcription. It depends on Mg(2+) as a cofactor. Zn(2+) is required as a cofactor.

The catalysed reaction is RNA(n) + a ribonucleoside 5'-triphosphate = RNA(n+1) + diphosphate. In terms of biological role, DNA-dependent RNA polymerase catalyzes the transcription of DNA into RNA using the four ribonucleoside triphosphates as substrates. This Bacteroides fragilis (strain ATCC 25285 / DSM 2151 / CCUG 4856 / JCM 11019 / LMG 10263 / NCTC 9343 / Onslow / VPI 2553 / EN-2) protein is DNA-directed RNA polymerase subunit beta'.